The chain runs to 201 residues: MSKRIAGPEIERLIQLLARVPGLGPRSARRAALHLIKKKEALLVPLGGAMQEAAEKVRICSCCGNVDTSDPCTICTDERRAPATLIVVEDVSDLWALERAGTMNVRYHVLGGRLSPLDGIGPDDLNIKGLVERVASGAIKEVILAVNATVEGQTTAHYITDQLSNFDVRVTRLAHGVPVGGELDYLDEGTLAAALRARTTL.

A C4-type zinc finger spans residues 60 to 75 (CSCCGNVDTSDPCTIC). A Toprim domain is found at 83-178 (ATLIVVEDVS…RVTRLAHGVP (96 aa)).

It belongs to the RecR family.

May play a role in DNA repair. It seems to be involved in an RecBC-independent recombinational process of DNA repair. It may act with RecF and RecO. This chain is Recombination protein RecR, found in Brucella ovis (strain ATCC 25840 / 63/290 / NCTC 10512).